Reading from the N-terminus, the 570-residue chain is Sulfite reductase [NADPH] hemoprotein beta-component (570 aa).

Residues Cys434, Cys440, Cys479, and Cys483 each contribute to the [4Fe-4S] cluster site. Cys483 contacts siroheme.

It belongs to the nitrite and sulfite reductase 4Fe-4S domain family. In terms of assembly, alpha(8)-beta(8). The alpha component is a flavoprotein, the beta component is a hemoprotein. It depends on siroheme as a cofactor. Requires [4Fe-4S] cluster as cofactor.

The catalysed reaction is hydrogen sulfide + 3 NADP(+) + 3 H2O = sulfite + 3 NADPH + 4 H(+). The protein operates within sulfur metabolism; hydrogen sulfide biosynthesis; hydrogen sulfide from sulfite (NADPH route): step 1/1. In terms of biological role, component of the sulfite reductase complex that catalyzes the 6-electron reduction of sulfite to sulfide. This is one of several activities required for the biosynthesis of L-cysteine from sulfate. The chain is Sulfite reductase [NADPH] hemoprotein beta-component from Zymomonas mobilis subsp. mobilis (strain ATCC 31821 / ZM4 / CP4).